The chain runs to 167 residues: Translationally-controlled tumor protein homolog (167 aa).

Residues 1–167 (MKLFTDIISN…WKDGLRETKI (167 aa)) enclose the TCTP domain.

The protein belongs to the TCTP family.

It localises to the cytoplasm. Its subcellular location is the cytoskeleton. Its function is as follows. Involved in protein synthesis. Involved in microtubule stabilization. The sequence is that of Translationally-controlled tumor protein homolog from Mycosarcoma maydis (Corn smut fungus).